We begin with the raw amino-acid sequence, 479 residues long: Ammonium transporter 3 member 2 (479 aa).

11 helical membrane passes run Val34–Val54, Trp59–Val79, Val139–Leu159, Phe164–Phe184, Gly202–Gly222, Ile237–Gly257, Asn272–Phe292, Val297–Val317, Trp321–Leu341, Leu355–Phe375, and Ile407–Ala427.

The protein belongs to the ammonia transporter channel (TC 1.A.11.2) family.

The protein resides in the membrane. Its function is as follows. Involved in ammonium transport. This chain is Ammonium transporter 3 member 2 (AMT3-2), found in Oryza sativa subsp. japonica (Rice).